Reading from the N-terminus, the 304-residue chain is tRNA pseudouridine synthase B (304 aa).

The active-site Nucleophile is aspartate 38.

Belongs to the pseudouridine synthase TruB family. Type 1 subfamily.

The enzyme catalyses uridine(55) in tRNA = pseudouridine(55) in tRNA. Responsible for synthesis of pseudouridine from uracil-55 in the psi GC loop of transfer RNAs. The protein is tRNA pseudouridine synthase B of Listeria monocytogenes serovar 1/2a (strain ATCC BAA-679 / EGD-e).